The sequence spans 499 residues: GTPase Der (499 aa).

Residues 3-166 (PVIALVGRPN…QALGIFPKDN (164 aa)) form the EngA-type G 1 domain. GTP is bound by residues 9–16 (GRPNVGKS), 56–60 (DTGGI), and 118–121 (NKVD). Positions 166–199 (NADENAEGEEGGELAEGEEVVAEGQEPKRIPGPS) are disordered. Over residues 168 to 186 (DENAEGEEGGELAEGEEVV) the composition is skewed to acidic residues. Over residues 190–199 (QEPKRIPGPS) the composition is skewed to basic and acidic residues. The 174-residue stretch at 204-377 (IKIAIIGRPN…SVQAAFKSAI (174 aa)) folds into the EngA-type G 2 domain. GTP is bound by residues 210-217 (GRPNVGKS), 257-261 (DTAGV), and 322-325 (NKWD). Residues 378 to 462 (TRWPTSRLTQ…PIRIEYKGGD (85 aa)) form the KH-like domain. Over residues 459–472 (KGGDNPYEGKKNTL) the composition is skewed to basic and acidic residues. The segment at 459 to 499 (KGGDNPYEGKKNTLTDRQVNKKRRLMSHHKKAEKKRRDKKR) is disordered. Residues 478–499 (NKKRRLMSHHKKAEKKRRDKKR) are compositionally biased toward basic residues.

It belongs to the TRAFAC class TrmE-Era-EngA-EngB-Septin-like GTPase superfamily. EngA (Der) GTPase family. Associates with the 50S ribosomal subunit.

Its function is as follows. GTPase that plays an essential role in the late steps of ribosome biogenesis. The chain is GTPase Der from Stutzerimonas stutzeri (strain A1501) (Pseudomonas stutzeri).